A 251-amino-acid chain; its full sequence is Orotidine 5'-phosphate decarboxylase (251 aa).

Residues D19, K42, 69 to 78 (DLKFHDIPNT), T133, R194, Q204, G224, and R225 each bind substrate. The Proton donor role is filled by K71.

It belongs to the OMP decarboxylase family. Type 1 subfamily. Homodimer.

The catalysed reaction is orotidine 5'-phosphate + H(+) = UMP + CO2. The protein operates within pyrimidine metabolism; UMP biosynthesis via de novo pathway; UMP from orotate: step 2/2. Catalyzes the decarboxylation of orotidine 5'-monophosphate (OMP) to uridine 5'-monophosphate (UMP). This is Orotidine 5'-phosphate decarboxylase from Syntrophus aciditrophicus (strain SB).